A 291-amino-acid polypeptide reads, in one-letter code: 4-diphosphocytidyl-2-C-methyl-D-erythritol kinase (291 aa).

Lys-21 is an active-site residue. Residue 104–114 (PMGGGLGGGSS) coordinates ATP. Residue Asp-146 is part of the active site.

This sequence belongs to the GHMP kinase family. IspE subfamily.

It catalyses the reaction 4-CDP-2-C-methyl-D-erythritol + ATP = 4-CDP-2-C-methyl-D-erythritol 2-phosphate + ADP + H(+). The protein operates within isoprenoid biosynthesis; isopentenyl diphosphate biosynthesis via DXP pathway; isopentenyl diphosphate from 1-deoxy-D-xylulose 5-phosphate: step 3/6. Functionally, catalyzes the phosphorylation of the position 2 hydroxy group of 4-diphosphocytidyl-2C-methyl-D-erythritol. The polypeptide is 4-diphosphocytidyl-2-C-methyl-D-erythritol kinase (Methylococcus capsulatus (strain ATCC 33009 / NCIMB 11132 / Bath)).